A 446-amino-acid polypeptide reads, in one-letter code: tRNA modification GTPase MnmE (446 aa).

Residues arginine 24, glutamate 81, and lysine 120 each contribute to the (6S)-5-formyl-5,6,7,8-tetrahydrofolate site. The region spanning 216 to 368 (GLHAVLIGPP…LHTRLRELAL (153 aa)) is the TrmE-type G domain. A K(+)-binding site is contributed by asparagine 226. GTP-binding positions include 226–231 (NAGKSS), 245–251 (TDVAGTT), and 270–273 (DTAG). Serine 230 is a binding site for Mg(2+). 3 residues coordinate K(+): threonine 245, valine 247, and threonine 250. Residue threonine 251 coordinates Mg(2+). Residue lysine 446 coordinates (6S)-5-formyl-5,6,7,8-tetrahydrofolate.

This sequence belongs to the TRAFAC class TrmE-Era-EngA-EngB-Septin-like GTPase superfamily. TrmE GTPase family. Homodimer. Heterotetramer of two MnmE and two MnmG subunits. Requires K(+) as cofactor.

It is found in the cytoplasm. Its function is as follows. Exhibits a very high intrinsic GTPase hydrolysis rate. Involved in the addition of a carboxymethylaminomethyl (cmnm) group at the wobble position (U34) of certain tRNAs, forming tRNA-cmnm(5)s(2)U34. In Xanthomonas campestris pv. campestris (strain 8004), this protein is tRNA modification GTPase MnmE.